The primary structure comprises 471 residues: Phosphatidylserine synthase 2 (471 aa).

The tract at residues Met1–Glu26 is disordered. At Met1 to Arg40 the chain is on the cytoplasmic side. Ser12, Ser14, and Ser16 each carry phosphoserine. The chain crosses the membrane as a helical span at residues Ala41–Glu61. At Glu62–Gly74 the chain is on the lumenal side. The chain crosses the membrane as a helical span at residues Ile75–Phe95. The Cytoplasmic portion of the chain corresponds to Ser96–Arg104. The chain crosses the membrane as a helical span at residues Phe105–Val125. The Lumenal segment spans residues His126–Arg291. A glycan (N-linked (GlcNAc...) asparagine) is linked at Asn159. The chain crosses the membrane as a helical span at residues Trp292–Leu312. Residue Lys313 is a topological domain, cytoplasmic. Residues Phe314–Asn334 form a helical membrane-spanning segment. At Val335 to Arg354 the chain is on the lumenal side. The chain crosses the membrane as a helical span at residues Lys355–Val375. Residues Lys376–Thr381 lie on the Cytoplasmic side of the membrane. Residues Leu382 to Leu402 form a helical membrane-spanning segment. The Lumenal segment spans residues Thr403–Ser471. A disordered region spans residues Arg423–Ser471.

It belongs to the phosphatidyl serine synthase family.

It is found in the endoplasmic reticulum membrane. The catalysed reaction is a 1,2-diacyl-sn-glycero-3-phosphoethanolamine + L-serine = a 1,2-diacyl-sn-glycero-3-phospho-L-serine + ethanolamine. It catalyses the reaction 1-hexadecanoyl-2-(9Z-octadecenoyl)-sn-glycero-3-phosphoethanolamine + L-serine = 1-hexadecanoyl-2-(9Z-octadecenoyl)-sn-glycero-3-phospho-L-serine + ethanolamine. The enzyme catalyses 1-hexadecanoyl-2-(4Z,7Z,10Z,13Z,16Z,19Z-docosahexaenoyl)-sn-glycero-3-phosphoethanolamine + L-serine = 1-hexadecanoyl-2-(4Z,7Z,10Z,13Z,16Z,19Z-docosahexaenoyl)-sn-glycero-3-phosphoserine + ethanolamine. It carries out the reaction 1-octadecanoyl-2-(5Z,8Z,11Z,14Z)-eicosatetraenoyl-sn-glycero-3-phosphoethanolamine + L-serine = 1-octadecanoyl-2-(5Z,8Z,11Z,14Z)-eicosatetraenoyl-sn-glycero-3-phosphoserine + ethanolamine. The catalysed reaction is 1-octadecanoyl-2-(4Z,7Z,10Z,13Z,16Z,19Z-docosahexaenoyl)-sn-glycero-3-phosphoethanolamine + L-serine = 1-octadecanoyl-2-(4Z,7Z,10Z,13Z,16Z,19Z-docosahexaenoyl)-sn-glycero-3-phosphoserine + ethanolamine. It catalyses the reaction 1-(1Z-octadecenyl)-2-(4Z,7Z,10Z,13Z,16Z,19Z-docosahexaenoyl)-sn-glycero-3-phosphoethanolamine + L-serine = 1-(1Z-octadecenyl)-2-(4Z,7Z,10Z,13Z,16Z,19Z-docosahexaenoyl)-sn-glycero-3-phospho-L-serine + ethanolamine. The enzyme catalyses 1-octadecanoyl-2-(9Z-octadecenoyl)-sn-glycero-3-phosphoethanolamine + L-serine = 1-octadecanoyl-2-(9Z-octadecenoyl)-sn-glycero-3-phospho-L-serine + ethanolamine. It carries out the reaction 1-(1Z-octadecenyl)-2-(9Z-octadecenoyl)-sn-glycero-3-phosphoethanolamine + L-serine = 1-(1Z-octadecenyl)-2-(9Z-octadecenoyl)-sn-glycero-3-phospho-L-serine + ethanolamine. The catalysed reaction is 1-(1Z-octadecenyl)-2-(5Z,8Z,11Z,14Z- eicosatetraenoyl)-sn-glycero-3-phosphoethanolamine + L-serine = 1-(1Z-octadecenyl)-2-(5Z,8Z,11Z,14Z-eicosatetraenoyl)-sn-glycero-3-phospho-L-serine + ethanolamine. It participates in phospholipid metabolism; phosphatidylserine biosynthesis. Its function is as follows. Catalyzes a base-exchange reaction in which the polar head group of phosphatidylethanolamine (PE) or phosphatidylcholine (PC) is replaced by L-serine. Catalyzes the conversion of phosphatatidylethanolamine and does not act on phosphatidylcholine. Can utilize both phosphatidylethanolamine (PE) plasmalogen and diacyl PE as substrate and the latter is six times better utilized, indicating the importance of an ester linkage at the sn-1 position. Although it shows no sn-1 fatty acyl preference, exhibits significant preference towards docosahexaenoic acid (22:6n-3) compared with 18:1 or 20:4 at the sn-2 position. In Rattus norvegicus (Rat), this protein is Phosphatidylserine synthase 2 (Ptdss2).